The chain runs to 138 residues: Calmodulin-beta (138 aa).

EF-hand domains lie at 1–32 (EFKE…LGQN), 33–68 (PTEA…KMKE), 70–105 (DSEE…LGEK), and 106–138 (LTDE…MTSK). D10, D12, D14, T16, E21, D46, D48, N50, T52, E57, D83, D85, N87, E94, D119, D121, D123, Q125, and E130 together coordinate Ca(2+).

It belongs to the calmodulin family.

In terms of biological role, calmodulin mediates the control of a large number of enzymes, ion channels and other proteins by Ca(2+). Among the enzymes to be stimulated by the calmodulin-Ca(2+) complex are a number of protein kinases and phosphatases. This Arbacia punctulata (Punctuate sea urchin) protein is Calmodulin-beta.